A 391-amino-acid chain; its full sequence is uncharacterized protein (391 aa).

It belongs to the mycobacterial PPE family.

This is an uncharacterized protein from Mycobacterium tuberculosis (strain CDC 1551 / Oshkosh).